The sequence spans 222 residues: Deoxyribose-phosphate aldolase (222 aa).

The Proton donor/acceptor role is filled by D93. K156 (schiff-base intermediate with acetaldehyde) is an active-site residue. The active-site Proton donor/acceptor is the K186.

This sequence belongs to the DeoC/FbaB aldolase family. DeoC type 1 subfamily.

It is found in the cytoplasm. The catalysed reaction is 2-deoxy-D-ribose 5-phosphate = D-glyceraldehyde 3-phosphate + acetaldehyde. It participates in carbohydrate degradation; 2-deoxy-D-ribose 1-phosphate degradation; D-glyceraldehyde 3-phosphate and acetaldehyde from 2-deoxy-alpha-D-ribose 1-phosphate: step 2/2. Catalyzes a reversible aldol reaction between acetaldehyde and D-glyceraldehyde 3-phosphate to generate 2-deoxy-D-ribose 5-phosphate. The chain is Deoxyribose-phosphate aldolase from Corynebacterium glutamicum (strain ATCC 13032 / DSM 20300 / JCM 1318 / BCRC 11384 / CCUG 27702 / LMG 3730 / NBRC 12168 / NCIMB 10025 / NRRL B-2784 / 534).